We begin with the raw amino-acid sequence, 156 residues long: MPRKGPVAKRDVLPDPIHNSKLVTKLINKIMIDGKRGTAQKILYNAFDLVQERSGRDAMEVFEEAINNIMPVLEVKARRVGGSNYQVPVEVRAERRTTLGLRWLVNYSRLRGEKTMEERLANEILDAANNTGGAVKKREDTHKMAEANKAFAHYRW.

This sequence belongs to the universal ribosomal protein uS7 family. Part of the 30S ribosomal subunit. Contacts proteins S9 and S11.

In terms of biological role, one of the primary rRNA binding proteins, it binds directly to 16S rRNA where it nucleates assembly of the head domain of the 30S subunit. Is located at the subunit interface close to the decoding center, probably blocks exit of the E-site tRNA. This is Small ribosomal subunit protein uS7 from Macrococcus caseolyticus (strain JCSC5402) (Macrococcoides caseolyticum).